A 666-amino-acid chain; its full sequence is DNA-directed RNA polymerase subunit beta' (666 aa).

Cysteine 69, cysteine 71, cysteine 87, and cysteine 90 together coordinate Zn(2+). Mg(2+) is bound by residues aspartate 489, aspartate 491, and aspartate 493.

The protein belongs to the RNA polymerase beta' chain family. RpoC1 subfamily. As to quaternary structure, in plastids the minimal PEP RNA polymerase catalytic core is composed of four subunits: alpha, beta, beta', and beta''. When a (nuclear-encoded) sigma factor is associated with the core the holoenzyme is formed, which can initiate transcription. Mg(2+) serves as cofactor. Requires Zn(2+) as cofactor.

It is found in the plastid. The protein localises to the chloroplast. It carries out the reaction RNA(n) + a ribonucleoside 5'-triphosphate = RNA(n+1) + diphosphate. Its function is as follows. DNA-dependent RNA polymerase catalyzes the transcription of DNA into RNA using the four ribonucleoside triphosphates as substrates. This is DNA-directed RNA polymerase subunit beta' from Chara vulgaris (Common stonewort).